A 207-amino-acid polypeptide reads, in one-letter code: uncharacterized protein (207 aa).

This sequence belongs to the methyltransferase superfamily.

This is an uncharacterized protein from Escherichia coli (strain K12).